We begin with the raw amino-acid sequence, 387 residues long: Phosphoglycerate kinase (387 aa).

Substrate is bound by residues 21–23, R36, 59–62, R113, and R146; these read DLN and HLGR. Residues K197, E314, and 340–343 each bind ATP; that span reads GGDT.

The protein belongs to the phosphoglycerate kinase family. Monomer.

Its subcellular location is the cytoplasm. The enzyme catalyses (2R)-3-phosphoglycerate + ATP = (2R)-3-phospho-glyceroyl phosphate + ADP. It functions in the pathway carbohydrate degradation; glycolysis; pyruvate from D-glyceraldehyde 3-phosphate: step 2/5. The polypeptide is Phosphoglycerate kinase (Pseudomonas aeruginosa (strain ATCC 15692 / DSM 22644 / CIP 104116 / JCM 14847 / LMG 12228 / 1C / PRS 101 / PAO1)).